The primary structure comprises 293 residues: ATP synthase subunit a (293 aa).

A run of 8 helical transmembrane segments spans residues 39 to 59 (QVFG…VYWI), 73 to 93 (FVLL…DLIG), 102 to 122 (YFLM…LGGI), 128 to 148 (SLTF…IMGI), 172 to 192 (TLIP…SISL), 198 to 218 (ILGG…AFST), 224 to 244 (LALS…HVYF), and 245 to 265 (DVVV…NYWA).

The protein belongs to the ATPase A chain family. As to quaternary structure, F-type ATPases have 2 components, CF(1) - the catalytic core - and CF(0) - the membrane proton channel. CF(1) has five subunits: alpha(3), beta(3), gamma(1), delta(1), epsilon(1). CF(0) has three main subunits: a(1), b(2) and c(9-12). The alpha and beta chains form an alternating ring which encloses part of the gamma chain. CF(1) is attached to CF(0) by a central stalk formed by the gamma and epsilon chains, while a peripheral stalk is formed by the delta and b chains.

Its subcellular location is the cell membrane. Functionally, key component of the proton channel; it plays a direct role in the translocation of protons across the membrane. The chain is ATP synthase subunit a from Mycoplasma pneumoniae (strain ATCC 29342 / M129 / Subtype 1) (Mycoplasmoides pneumoniae).